The following is a 186-amino-acid chain: TATA-box-binding protein F (186 aa).

Repeat copies occupy residues Ile10 to Leu86 and Val101 to Leu179.

This sequence belongs to the TBP family.

In terms of biological role, general factor that plays a role in the activation of archaeal genes transcribed by RNA polymerase. Binds specifically to the TATA box promoter element which lies close to the position of transcription initiation. The chain is TATA-box-binding protein F (tbpF) from Halobacterium salinarum (strain ATCC 700922 / JCM 11081 / NRC-1) (Halobacterium halobium).